A 341-amino-acid polypeptide reads, in one-letter code: CD2 antigen cytoplasmic tail-binding protein 2 (341 aa).

Residues 1–66 (MPKRKVTFQG…DGGSSKYDIL (66 aa)) form a disordered region. Lys26 participates in a covalent cross-link: Glycyl lysine isopeptide (Lys-Gly) (interchain with G-Cter in SUMO2). An N6-acetyllysine modification is found at Lys44. Phosphoserine occurs at positions 46, 49, and 118. The span at 49–58 (SDEEEDDDDG) shows a compositional bias: acidic residues. Disordered stretches follow at residues 131–151 (RPPG…GQTS) and 178–199 (LGAR…PQRL). Ser194 and Ser195 each carry phosphoserine. Residues 280 to 338 (DVMWEYKWENTGDAELYGPFTSAQMQTWVSEGYFPDGVYCRKLDPPGGQFYNSKRIDFD) form the GYF domain.

In terms of assembly, component of the U5 snRNP complex composed of the U5 snRNA and at least PRPF6, PRPF8, SNRNP200, EFTUD2, SNRNP40, DDX23, TXNL4A and CD2BP2. Interacts directly with TXNL4A and PRPF6. Interacts (via GYF domain) with CD2 (via Pro-rich sequence in the cytoplasmic domain). Interacts with PQBP1.

Its subcellular location is the cytoplasm. It localises to the nucleus. Involved in pre-mRNA splicing as component of the U5 snRNP complex that is involved in spliceosome assembly. The sequence is that of CD2 antigen cytoplasmic tail-binding protein 2 (CD2BP2) from Homo sapiens (Human).